The sequence spans 424 residues: Tyrosine--tRNA ligase (424 aa).

Tyr-37 is an L-tyrosine binding site. The short motif at 42 to 51 is the 'HIGH' region element; it reads PTADSLHLGH. Lys-144 carries the post-translational modification N6-acetyllysine. L-tyrosine-binding residues include Tyr-175 and Gln-179. The short motif at 235–239 is the 'KMSKS' region element; it reads KFGKT. Residue Lys-238 participates in ATP binding. One can recognise an S4 RNA-binding domain in the interval 357–414; it reads ADLMQALVDSELQPSRGQARKTIASNAVTINGEKQSDPEYFFKEEDRLFGRFTLLRRG.

The protein belongs to the class-I aminoacyl-tRNA synthetase family. TyrS type 1 subfamily. In terms of assembly, homodimer.

The protein localises to the cytoplasm. The catalysed reaction is tRNA(Tyr) + L-tyrosine + ATP = L-tyrosyl-tRNA(Tyr) + AMP + diphosphate + H(+). Its function is as follows. Catalyzes the attachment of tyrosine to tRNA(Tyr) in a two-step reaction: tyrosine is first activated by ATP to form Tyr-AMP and then transferred to the acceptor end of tRNA(Tyr). This is Tyrosine--tRNA ligase from Escherichia fergusonii (strain ATCC 35469 / DSM 13698 / CCUG 18766 / IAM 14443 / JCM 21226 / LMG 7866 / NBRC 102419 / NCTC 12128 / CDC 0568-73).